Reading from the N-terminus, the 224-residue chain is MKIAVIVFPGSNCDIDLYEALHTVCDADVEYVSYKQDNLDGFDAVMLPGGFSYGDYLRCGAIARFSPIMPAVIEFAKNGKPVFGTCNGFQILTEVGLLPGALKQNNSLKFVCKTVELTVENTNTPFTSLYKKGEKINLPIAHADGSYYADEELLAELEENGQVVFRYSKENPNGSLNDIAGITNKQGNVLGMMPHPERAVEMLLGNEDGLRVFKSLLEEGKVKG.

The region spanning 2–224 (KIAVIVFPGS…SLLEEGKVKG (223 aa)) is the Glutamine amidotransferase type-1 domain. The Nucleophile role is filled by C86. Active-site residues include H195 and E197.

In terms of assembly, part of the FGAM synthase complex composed of 1 PurL, 1 PurQ and 2 PurS subunits.

It is found in the cytoplasm. The enzyme catalyses N(2)-formyl-N(1)-(5-phospho-beta-D-ribosyl)glycinamide + L-glutamine + ATP + H2O = 2-formamido-N(1)-(5-O-phospho-beta-D-ribosyl)acetamidine + L-glutamate + ADP + phosphate + H(+). The catalysed reaction is L-glutamine + H2O = L-glutamate + NH4(+). The protein operates within purine metabolism; IMP biosynthesis via de novo pathway; 5-amino-1-(5-phospho-D-ribosyl)imidazole from N(2)-formyl-N(1)-(5-phospho-D-ribosyl)glycinamide: step 1/2. Functionally, part of the phosphoribosylformylglycinamidine synthase complex involved in the purines biosynthetic pathway. Catalyzes the ATP-dependent conversion of formylglycinamide ribonucleotide (FGAR) and glutamine to yield formylglycinamidine ribonucleotide (FGAM) and glutamate. The FGAM synthase complex is composed of three subunits. PurQ produces an ammonia molecule by converting glutamine to glutamate. PurL transfers the ammonia molecule to FGAR to form FGAM in an ATP-dependent manner. PurS interacts with PurQ and PurL and is thought to assist in the transfer of the ammonia molecule from PurQ to PurL. The polypeptide is Phosphoribosylformylglycinamidine synthase subunit PurQ (Ligilactobacillus salivarius (strain UCC118) (Lactobacillus salivarius)).